The primary structure comprises 141 residues: ATP synthase epsilon chain 1 (141 aa).

It belongs to the ATPase epsilon chain family. In terms of assembly, F-type ATPases have 2 components, CF(1) - the catalytic core - and CF(0) - the membrane proton channel. CF(1) has five subunits: alpha(3), beta(3), gamma(1), delta(1), epsilon(1). CF(0) has three main subunits: a, b and c.

The protein localises to the cell inner membrane. Produces ATP from ADP in the presence of a proton gradient across the membrane. This chain is ATP synthase epsilon chain 1, found in Thiobacillus denitrificans (strain ATCC 25259 / T1).